A 119-amino-acid polypeptide reads, in one-letter code: Large ribosomal subunit protein bL20 (119 aa).

Belongs to the bacterial ribosomal protein bL20 family.

Functionally, binds directly to 23S ribosomal RNA and is necessary for the in vitro assembly process of the 50S ribosomal subunit. It is not involved in the protein synthesizing functions of that subunit. The polypeptide is Large ribosomal subunit protein bL20 (Coxiella burnetii (strain CbuK_Q154) (Coxiella burnetii (strain Q154))).